Reading from the N-terminus, the 219-residue chain is Uridylate kinase (219 aa).

An ATP-binding site is contributed by 9–10 (GS). G41 contributes to the UMP binding site. Positions 42 and 46 each coordinate ATP. UMP contacts are provided by residues D63 and 110–116 (TFPGHTT). ATP is bound by residues T136, N137, Y142, and D145.

The protein belongs to the UMP kinase family. As to quaternary structure, homohexamer.

Its subcellular location is the cytoplasm. It carries out the reaction UMP + ATP = UDP + ADP. It functions in the pathway pyrimidine metabolism; CTP biosynthesis via de novo pathway; UDP from UMP (UMPK route): step 1/1. Inhibited by UTP. Catalyzes the reversible phosphorylation of UMP to UDP. This Archaeoglobus fulgidus (strain ATCC 49558 / DSM 4304 / JCM 9628 / NBRC 100126 / VC-16) protein is Uridylate kinase.